The primary structure comprises 482 residues: Beta-1,3-glucan-binding protein 2 (482 aa).

The N-terminal stretch at 1-18 (MWIKSVCLFATIAGCLGQ) is a signal peptide. In terms of domain architecture, CBM39 spans 23–122 (YKVPDAKLEA…GEWTVTEFVN (100 aa)). The N-linked (GlcNAc...) asparagine glycan is linked to N124. Residues 127-153 (VVDTSTAPPPVAPAVSEEDQSPGPQWR) are disordered. One can recognise a GH16 domain in the interval 128-482 (VDTSTAPPPV…KVDYVRVYAL (355 aa)). N189 carries N-linked (GlcNAc...) asparagine glycosylation.

In terms of assembly, monomer. N-glycosylated. Cuticle and fat body.

The protein localises to the secreted. In terms of biological role, involved in the recognition of invading microorganisms. Binds specifically to beta-1,3-glucan and lipoteichoic acid and causes aggregation of invading microorganisms. Binding to beta-1,3-glucan activates the phenoloxidase cascade. The protein is Beta-1,3-glucan-binding protein 2 of Manduca sexta (Tobacco hawkmoth).